The primary structure comprises 204 residues: Recombination protein RecR (204 aa).

The segment at Cys-61 to Cys-76 adopts a C4-type zinc-finger fold. Positions Ser-84 to Pro-183 constitute a Toprim domain.

It belongs to the RecR family.

Its function is as follows. May play a role in DNA repair. It seems to be involved in an RecBC-independent recombinational process of DNA repair. It may act with RecF and RecO. This chain is Recombination protein RecR, found in Polynucleobacter necessarius subsp. necessarius (strain STIR1).